Reading from the N-terminus, the 368-residue chain is tRNA(Met) cytidine acetate ligase (368 aa).

ATP-binding positions include 7–20 (IAEF…HKYL), G96, N152, and R175.

The protein belongs to the TmcAL family.

The protein resides in the cytoplasm. The enzyme catalyses cytidine(34) in elongator tRNA(Met) + acetate + ATP = N(4)-acetylcytidine(34) in elongator tRNA(Met) + AMP + diphosphate. Its function is as follows. Catalyzes the formation of N(4)-acetylcytidine (ac(4)C) at the wobble position of elongator tRNA(Met), using acetate and ATP as substrates. First activates an acetate ion to form acetyladenylate (Ac-AMP) and then transfers the acetyl group to tRNA to form ac(4)C34. The polypeptide is tRNA(Met) cytidine acetate ligase (Streptococcus pyogenes serotype M5 (strain Manfredo)).